A 248-amino-acid polypeptide reads, in one-letter code: Triosephosphate isomerase B (248 aa).

Substrate is bound by residues N11 and K13. H95 (electrophile) is an active-site residue. The active-site Proton acceptor is the E165.

This sequence belongs to the triosephosphate isomerase family. Homodimer.

It is found in the cytoplasm. It carries out the reaction dihydroxyacetone phosphate = methylglyoxal + phosphate. The catalysed reaction is D-glyceraldehyde 3-phosphate = dihydroxyacetone phosphate. The protein operates within carbohydrate degradation; glycolysis; D-glyceraldehyde 3-phosphate from glycerone phosphate: step 1/1. It functions in the pathway carbohydrate biosynthesis; gluconeogenesis. In terms of biological role, triosephosphate isomerase is an extremely efficient metabolic enzyme that catalyzes the interconversion between dihydroxyacetone phosphate (DHAP) and D-glyceraldehyde-3-phosphate (G3P) in glycolysis and gluconeogenesis. It is also responsible for the non-negligible production of methylglyoxal a reactive cytotoxic side-product that modifies and can alter proteins, DNA and lipids. This Danio rerio (Zebrafish) protein is Triosephosphate isomerase B (tpi1b).